The following is a 314-amino-acid chain: tRNA pseudouridine synthase B (314 aa).

Asp41 serves as the catalytic Nucleophile.

It belongs to the pseudouridine synthase TruB family. Type 1 subfamily.

The catalysed reaction is uridine(55) in tRNA = pseudouridine(55) in tRNA. Its function is as follows. Responsible for synthesis of pseudouridine from uracil-55 in the psi GC loop of transfer RNAs. This is tRNA pseudouridine synthase B from Prochlorococcus marinus (strain NATL1A).